The following is a 179-amino-acid chain: 3-hydroxyanthranilate 3,4-dioxygenase 2 (179 aa).

Arg44 is an O2 binding site. Fe cation-binding residues include His48, Glu60, and His99. Residue Glu60 coordinates substrate. Positions 103 and 113 each coordinate substrate.

It belongs to the 3-HAO family. Fe(2+) is required as a cofactor.

The protein localises to the cytoplasm. The enzyme catalyses 3-hydroxyanthranilate + O2 = (2Z,4Z)-2-amino-3-carboxymuconate 6-semialdehyde. The protein operates within cofactor biosynthesis; NAD(+) biosynthesis; quinolinate from L-kynurenine: step 3/3. Its function is as follows. Catalyzes the oxidative ring opening of 3-hydroxyanthranilate to 2-amino-3-carboxymuconate semialdehyde, which spontaneously cyclizes to quinolinate. This chain is 3-hydroxyanthranilate 3,4-dioxygenase 2 (bna1-2), found in Aspergillus oryzae (strain ATCC 42149 / RIB 40) (Yellow koji mold).